The sequence spans 156 residues: Protein SprT (156 aa).

One can recognise a SprT-like domain in the interval Asn15 to Leu153. Position 67 (His67) interacts with Zn(2+). Glu68 is an active-site residue. His71 provides a ligand contact to Zn(2+).

It belongs to the SprT family. Zn(2+) is required as a cofactor.

The protein localises to the cytoplasm. The chain is Protein SprT from Glaesserella parasuis serovar 5 (strain SH0165) (Haemophilus parasuis).